Reading from the N-terminus, the 294-residue chain is 1D-myo-inositol 2-acetamido-2-deoxy-alpha-D-glucopyranoside deacetylase (294 aa).

Residues H14, D17, and H149 each coordinate Zn(2+).

Belongs to the MshB deacetylase family. Zn(2+) serves as cofactor.

The catalysed reaction is 1D-myo-inositol 2-acetamido-2-deoxy-alpha-D-glucopyranoside + H2O = 1D-myo-inositol 2-amino-2-deoxy-alpha-D-glucopyranoside + acetate. Catalyzes the deacetylation of 1D-myo-inositol 2-acetamido-2-deoxy-alpha-D-glucopyranoside (GlcNAc-Ins) in the mycothiol biosynthesis pathway. The polypeptide is 1D-myo-inositol 2-acetamido-2-deoxy-alpha-D-glucopyranoside deacetylase (Rhodococcus erythropolis (strain PR4 / NBRC 100887)).